A 193-amino-acid polypeptide reads, in one-letter code: Xanthine phosphoribosyltransferase (193 aa).

2 residues coordinate xanthine: Leu20 and Thr27. 128 to 132 serves as a coordination point for 5-phospho-alpha-D-ribose 1-diphosphate; it reads ANGQA. A xanthine-binding site is contributed by Lys156.

It belongs to the purine/pyrimidine phosphoribosyltransferase family. Xpt subfamily. As to quaternary structure, homodimer.

It is found in the cytoplasm. The catalysed reaction is XMP + diphosphate = xanthine + 5-phospho-alpha-D-ribose 1-diphosphate. It participates in purine metabolism; XMP biosynthesis via salvage pathway; XMP from xanthine: step 1/1. Its function is as follows. Converts the preformed base xanthine, a product of nucleic acid breakdown, to xanthosine 5'-monophosphate (XMP), so it can be reused for RNA or DNA synthesis. The protein is Xanthine phosphoribosyltransferase of Streptococcus pneumoniae serotype 4 (strain ATCC BAA-334 / TIGR4).